The following is an 882-amino-acid chain: DNA mismatch repair protein MutS (882 aa).

656 to 663 (GPNASGKS) provides a ligand contact to ATP.

It belongs to the DNA mismatch repair MutS family.

In terms of biological role, this protein is involved in the repair of mismatches in DNA. It is possible that it carries out the mismatch recognition step. This protein has a weak ATPase activity. The chain is DNA mismatch repair protein MutS from Synechococcus elongatus (strain ATCC 33912 / PCC 7942 / FACHB-805) (Anacystis nidulans R2).